A 345-amino-acid chain; its full sequence is Biotin synthase (345 aa).

In terms of domain architecture, Radical SAM core spans 67–295 (YKVQLASLLS…KSRIRLSAGR (229 aa)). The [4Fe-4S] cluster site is built by cysteine 82, cysteine 86, and cysteine 89. [2Fe-2S] cluster contacts are provided by cysteine 126, cysteine 158, cysteine 218, and arginine 290.

This sequence belongs to the radical SAM superfamily. Biotin synthase family. Homodimer. It depends on [4Fe-4S] cluster as a cofactor. Requires [2Fe-2S] cluster as cofactor.

The enzyme catalyses (4R,5S)-dethiobiotin + (sulfur carrier)-SH + 2 reduced [2Fe-2S]-[ferredoxin] + 2 S-adenosyl-L-methionine = (sulfur carrier)-H + biotin + 2 5'-deoxyadenosine + 2 L-methionine + 2 oxidized [2Fe-2S]-[ferredoxin]. It functions in the pathway cofactor biosynthesis; biotin biosynthesis; biotin from 7,8-diaminononanoate: step 2/2. Catalyzes the conversion of dethiobiotin (DTB) to biotin by the insertion of a sulfur atom into dethiobiotin via a radical-based mechanism. The protein is Biotin synthase of Prochlorococcus marinus (strain NATL1A).